The chain runs to 77 residues: Translation initiation factor IF-1, chloroplastic (77 aa).

In terms of domain architecture, S1-like spans 1–71 (MKEQKLIHEG…TRGRIIYRLR (71 aa)).

The protein belongs to the IF-1 family. Component of the 30S ribosomal translation pre-initiation complex which assembles on the 30S ribosome in the order IF-2 and IF-3, IF-1 and N-formylmethionyl-tRNA(fMet); mRNA recruitment can occur at any time during PIC assembly.

The protein localises to the plastid. It is found in the chloroplast. One of the essential components for the initiation of protein synthesis. Stabilizes the binding of IF-2 and IF-3 on the 30S subunit to which N-formylmethionyl-tRNA(fMet) subsequently binds. Helps modulate mRNA selection, yielding the 30S pre-initiation complex (PIC). Upon addition of the 50S ribosomal subunit IF-1, IF-2 and IF-3 are released leaving the mature 70S translation initiation complex. The chain is Translation initiation factor IF-1, chloroplastic from Asarum canadense (Wild ginger).